The chain runs to 485 residues: Two-component response regulator ORR31 (485 aa).

The Response regulatory domain occupies 13 to 138 (RVMPVDGDTK…TMAQLWRVVA (126 aa)). D66 carries the 4-aspartylphosphate modification. Residues 195 to 204 (LTINVDSGSS) are compositionally biased toward polar residues. The interval 195–236 (LTINVDSGSSDGADANPRQKLEHKKDAKGPLGQHVASHLQPQ) is disordered. Residues 211–222 (PRQKLEHKKDAK) are compositionally biased toward basic and acidic residues.

The protein belongs to the ARR family. Type-B subfamily. In terms of processing, two-component system major event consists of a His-to-Asp phosphorelay between a sensor histidine kinase (HK) and a response regulator (RR). In plants, the His-to-Asp phosphorelay involves an additional intermediate named Histidine-containing phosphotransfer protein (HPt). This multistep phosphorelay consists of a His-Asp-His-Asp sequential transfer of a phosphate group between first a His and an Asp of the HK protein, followed by the transfer to a conserved His of the HPt protein and finally the transfer to an Asp in the receiver domain of the RR protein.

Its function is as follows. Functions as a response regulator involved in His-to-Asp phosphorelay signal transduction system. Phosphorylation of the Asp residue in the receiver domain activates the ability of the protein to promote the transcription of target genes. May directly activate some type-A response regulators in response to cytokinins. The protein is Two-component response regulator ORR31 of Oryza sativa subsp. japonica (Rice).